The primary structure comprises 398 residues: Phosphoglycerate kinase (398 aa).

Residues 21–23, R36, 59–62, R119, and R157 each bind substrate; these read DFN and HLGR. ATP contacts are provided by residues K208, G296, E327, and 354-357; that span reads GGDS.

It belongs to the phosphoglycerate kinase family. Monomer.

The protein localises to the cytoplasm. The enzyme catalyses (2R)-3-phosphoglycerate + ATP = (2R)-3-phospho-glyceroyl phosphate + ADP. The protein operates within carbohydrate degradation; glycolysis; pyruvate from D-glyceraldehyde 3-phosphate: step 2/5. This is Phosphoglycerate kinase from Streptococcus mutans serotype c (strain ATCC 700610 / UA159).